The primary structure comprises 966 residues: Valine--tRNA ligase (966 aa).

A 'HIGH' region motif is present at residues proline 48–histidine 58. Residues aspartate 348–aspartate 368 are a coiled coil. A 'KMSKS' region motif is present at residues lysine 566–serine 570. Position 569 (lysine 569) interacts with ATP. Positions phenylalanine 939–tyrosine 960 form a coiled coil.

Belongs to the class-I aminoacyl-tRNA synthetase family. ValS type 1 subfamily. As to quaternary structure, monomer.

It localises to the cytoplasm. It catalyses the reaction tRNA(Val) + L-valine + ATP = L-valyl-tRNA(Val) + AMP + diphosphate. In terms of biological role, catalyzes the attachment of valine to tRNA(Val). As ValRS can inadvertently accommodate and process structurally similar amino acids such as threonine, to avoid such errors, it has a 'posttransfer' editing activity that hydrolyzes mischarged Thr-tRNA(Val) in a tRNA-dependent manner. The chain is Valine--tRNA ligase from Blochmanniella floridana.